Reading from the N-terminus, the 106-residue chain is Protein U4 (106 aa).

A helical transmembrane segment spans residues Phe-5 to Val-25.

Belongs to the nanovirus U4 protein family.

It is found in the membrane. The sequence is that of Protein U4 (DNA-U4) from Cicer arietinum (Chickpea).